A 288-amino-acid polypeptide reads, in one-letter code: DegV domain-containing protein (288 aa).

In terms of domain architecture, DegV spans 3–282; the sequence is IAVMTDSTSY…SGGLGLGYVG (280 aa). Residues threonine 62 and serine 95 each coordinate hexadecanoate.

Functionally, may bind long-chain fatty acids, such as palmitate, and may play a role in lipid transport or fatty acid metabolism. The polypeptide is DegV domain-containing protein (Staphylococcus aureus).